A 727-amino-acid chain; its full sequence is Glycerol-3-phosphate dehydrogenase, mitochondrial (727 aa).

The N-terminal 42 residues, 1-42, are a transit peptide targeting the mitochondrion; the sequence is MAFQKAVKGTILVGGGALATVLGLSPFAHYRRKQVSLAYVEA. 71–99 lines the FAD pocket; sequence DILVIGGGATGCGCALDAVTRGLKTALVE. Residue tyrosine 601 is modified to Phosphotyrosine. 2 EF-hand domains span residues 623–658 and 659–694; these read SDID…INVQ and MDEN…VQKG. Aspartate 672, asparagine 674, asparagine 676, glutamine 678, and glutamate 683 together coordinate Ca(2+).

Belongs to the FAD-dependent glycerol-3-phosphate dehydrogenase family. Requires FAD as cofactor.

It localises to the mitochondrion inner membrane. It catalyses the reaction a quinone + sn-glycerol 3-phosphate = dihydroxyacetone phosphate + a quinol. It functions in the pathway polyol metabolism; glycerol degradation via glycerol kinase pathway; glycerone phosphate from sn-glycerol 3-phosphate (anaerobic route): step 1/1. Its activity is regulated as follows. Calcium-binding enhance the activity of the enzyme. Calcium-responsive mitochondrial glycerol-3-phosphate dehydrogenase which seems to be a key component of the pancreatic beta-cell glucose-sensing device. This is Glycerol-3-phosphate dehydrogenase, mitochondrial from Mus musculus (Mouse).